The following is a 587-amino-acid chain: uncharacterized protein (587 aa).

The YcaO domain maps to 61–426 (GKGASKKAAL…DLPNWHHDAE (366 aa)).

This is an uncharacterized protein from Haemophilus influenzae (strain ATCC 51907 / DSM 11121 / KW20 / Rd).